We begin with the raw amino-acid sequence, 555 residues long: Wee1-like protein kinase 2-A (555 aa).

2 disordered regions span residues 1–81 and 149–175; these read MRTA…SVGA and FTPESYRQTHFQPNGKRKERPEDDCRT. A compositionally biased stretch (polar residues) spans 38–48; that stretch reads SPVSSWRTNNC. Residues 68–78 are compositionally biased toward low complexity; that stretch reads SPSSDYSPDPS. Over residues 149 to 160 the composition is skewed to polar residues; that stretch reads FTPESYRQTHFQ. One can recognise a Protein kinase domain in the interval 210-480; that stretch reads FLEIEKIGAG…AASLAKNSVL (271 aa). ATP is bound by residues 216–224 and Lys239; that span reads IGAGEFGSV. The active-site Proton acceptor is the Asp337. Positions 342 and 374 each coordinate Mg(2+). Residues 487–513 are a coiled coil; it reads AAQLQKQLNVEKFKTAMLERELKAAKL. Ser549 carries the post-translational modification Phosphoserine.

This sequence belongs to the protein kinase superfamily. Ser/Thr protein kinase family. WEE1 subfamily. In terms of assembly, interacts with prmt5; this promotes protesomal degradation of wee2-a in the nucleus. The interaction with prmt5 is disrupted upon activation of the DNA replication checkpoint. Subject to proteasomal degradation in the nucleus. As to expression, detected in egg (at protein level). Oocyte-specific maternally supplied protein. Present in immature and mature oocytes and in early (pregastrula) embryos, but not in post-gastrula embryos.

It localises to the nucleus. The protein resides in the cytoplasm. The protein localises to the cytosol. It carries out the reaction L-tyrosyl-[protein] + ATP = O-phospho-L-tyrosyl-[protein] + ADP + H(+). In terms of biological role, oocyte-specific protein tyrosine kinase that phosphorylates and inhibits cdk1 and acts as a key regulator of meiosis. Required to maintain meiotic arrest in oocytes by phosphorylating cdk1 at 'Tyr-15', which inhibits cdk1 activity and prevents meiotic reentry. Negative regulator of mitosis. Involved in the mitotic DNA replication checkpoint. This chain is Wee1-like protein kinase 2-A (wee2-a), found in Xenopus laevis (African clawed frog).